A 1053-amino-acid chain; its full sequence is Middle cell wall protein (1053 aa).

Positions 1–23 (MKKVVNSVLASALALTVAPMAFA) are cleaved as a signal peptide. 3 consecutive SLH domains span residues 26–89 (EAAT…KLAQ), 90–153 (FSNT…KGVW), and 154–203 (PNSM…FGTD).

As to quaternary structure, the middle cell wall layer is composed of subunits of the middle cell wall protein. These proteins form a hexagonal array with a lattice constant of 14.5 nM in the middle cell wall layers.

The protein localises to the secreted. It localises to the cell wall. Its subcellular location is the S-layer. The middle wall protein binds to peptidoglycan and to the outer cell wall protein. The protein is Middle cell wall protein of Brevibacillus brevis (strain 47 / JCM 6285 / NBRC 100599).